A 363-amino-acid polypeptide reads, in one-letter code: Phosphoserine aminotransferase (363 aa).

Residue Arg-42 participates in L-glutamate binding. Residues 76 to 77, Trp-102, Thr-156, Asp-175, and Gln-198 each bind pyridoxal 5'-phosphate; that span reads GR. Lys-199 carries the post-translational modification N6-(pyridoxal phosphate)lysine. Position 240 to 241 (240 to 241) interacts with pyridoxal 5'-phosphate; it reads NT.

It belongs to the class-V pyridoxal-phosphate-dependent aminotransferase family. SerC subfamily. In terms of assembly, homodimer. Requires pyridoxal 5'-phosphate as cofactor.

The protein localises to the cytoplasm. It catalyses the reaction O-phospho-L-serine + 2-oxoglutarate = 3-phosphooxypyruvate + L-glutamate. It carries out the reaction 4-(phosphooxy)-L-threonine + 2-oxoglutarate = (R)-3-hydroxy-2-oxo-4-phosphooxybutanoate + L-glutamate. It participates in amino-acid biosynthesis; L-serine biosynthesis; L-serine from 3-phospho-D-glycerate: step 2/3. The protein operates within cofactor biosynthesis; pyridoxine 5'-phosphate biosynthesis; pyridoxine 5'-phosphate from D-erythrose 4-phosphate: step 3/5. Catalyzes the reversible conversion of 3-phosphohydroxypyruvate to phosphoserine and of 3-hydroxy-2-oxo-4-phosphonooxybutanoate to phosphohydroxythreonine. This Shewanella sp. (strain ANA-3) protein is Phosphoserine aminotransferase.